Here is a 525-residue protein sequence, read N- to C-terminus: Peptide chain release factor 3 (525 aa).

The tr-type G domain occupies N11–A279. Residues S20–T27, D88–H92, and N142–D145 each bind GTP.

Belongs to the TRAFAC class translation factor GTPase superfamily. Classic translation factor GTPase family. PrfC subfamily.

The protein resides in the cytoplasm. Functionally, increases the formation of ribosomal termination complexes and stimulates activities of RF-1 and RF-2. It binds guanine nucleotides and has strong preference for UGA stop codons. It may interact directly with the ribosome. The stimulation of RF-1 and RF-2 is significantly reduced by GTP and GDP, but not by GMP. The polypeptide is Peptide chain release factor 3 (Ligilactobacillus salivarius (strain UCC118) (Lactobacillus salivarius)).